A 255-amino-acid polypeptide reads, in one-letter code: Putative deoxyribonuclease tatdn3-B (255 aa).

Residues H11, H13, E106, H129, H152, and D199 each coordinate Zn(2+).

Belongs to the metallo-dependent hydrolases superfamily. TatD-type hydrolase family. Requires Mn(2+) as cofactor. Ca(2+) serves as cofactor. Mg(2+) is required as a cofactor. The cofactor is Zn(2+).

The protein localises to the nucleus. Its activity is regulated as follows. The 3'-exonuclease activity is sensitive to the metal ion present in the active site, whereas the AP endodeoxyribonuclease activity is observed in a variety of divalent metal cofactors. 3'-exoxonuclease activity is suppressed in the presence of Ca(2+), Zn(2+) and Ni(2+). Exhibits 3'-exonuclease activities and apurinic/apyrimidinic (AP) endonuclease (in vitro). Show preferential AP endonuclease activity on double-stranded DNA substrates and 3'- exonuclease activity on single-stranded DNA. The polypeptide is Putative deoxyribonuclease tatdn3-B (tatdn3-b) (Xenopus laevis (African clawed frog)).